Here is a 200-residue protein sequence, read N- to C-terminus: Probable GTP-binding protein EngB (200 aa).

One can recognise an EngB-type G domain in the interval 22-199 (NVAEVAFLGR…QDKITGYLFG (178 aa)). GTP-binding positions include 30-37 (GRSNVGKS), 57-61 (GKTQL), 85-88 (DLPG), 155-158 (TKID), and 177-180 (FLSN). Residues Ser-37 and Thr-59 each coordinate Mg(2+).

The protein belongs to the TRAFAC class TrmE-Era-EngA-EngB-Septin-like GTPase superfamily. EngB GTPase family. Mg(2+) is required as a cofactor.

Functionally, necessary for normal cell division and for the maintenance of normal septation. The sequence is that of Probable GTP-binding protein EngB from Aliarcobacter butzleri (strain RM4018) (Arcobacter butzleri).